A 549-amino-acid chain; its full sequence is Limonene dehydrogenase subunit B (549 aa).

This sequence belongs to the carotenoid/retinoid oxidoreductase family. In terms of assembly, heterodimer composed of CtmA and CtmB. Requires FAD as cofactor.

The protein localises to the cytoplasm. It carries out the reaction (4S)-limonene + A + H2O = (4S)-perillyl alcohol + AH2. The catalysed reaction is (4R)-limonene + A + H2O = (4R)-perillyl alcohol + AH2. Its pathway is terpene metabolism; monoterpene degradation. Its activity is regulated as follows. The presence of molecular oxygen causes a 40% reduction in specific activity. Functionally, involved in the degradation of the cyclic monoterpene limonene. Catalyzes the oxidation of limonene at the primary methyl group, forming perillyl alcohol. Hydroxylates the R- and S-enantiomers to their respective enantiomeric form of perillyl alcohol at a similar rate. Native CtmAB oxidizes a wide range of monocyclic monoterpenes containing the allylic methyl group motif (1-methyl-cyclohex-1-ene). Can also catalyze the reverse reaction, the reduction of perillyl alcohol to limonene, but with lower efficiency. Cannot use molecular oxygen as an electron acceptor. The natural electron acceptor is likely a heterodimeric electron transfer flavoprotein (ETF). In Castellaniella defragrans (strain DSM 12143 / CCUG 39792 / 65Phen) (Alcaligenes defragrans), this protein is Limonene dehydrogenase subunit B.